The primary structure comprises 198 residues: Holliday junction branch migration complex subunit RuvA (198 aa).

Residues 1–61 form a domain I region; that stretch reads MYEYFEGIIQ…DNDQTLYGFE (61 aa). The tract at residues 62 to 140 is domain II; that stretch reads GAADKRTFNQ…TDGQPAAAAI (79 aa). The flexible linker stretch occupies residues 141–145; sequence APVAS. Positions 146 to 198 are domain III; sequence DVDSELADALAALVALGYPQRTVDGLTDTLKAFSAKTTDAYLREGLRLLSGKA.

It belongs to the RuvA family. As to quaternary structure, homotetramer. Forms an RuvA(8)-RuvB(12)-Holliday junction (HJ) complex. HJ DNA is sandwiched between 2 RuvA tetramers; dsDNA enters through RuvA and exits via RuvB. An RuvB hexamer assembles on each DNA strand where it exits the tetramer. Each RuvB hexamer is contacted by two RuvA subunits (via domain III) on 2 adjacent RuvB subunits; this complex drives branch migration. In the full resolvosome a probable DNA-RuvA(4)-RuvB(12)-RuvC(2) complex forms which resolves the HJ.

The protein resides in the cytoplasm. Functionally, the RuvA-RuvB-RuvC complex processes Holliday junction (HJ) DNA during genetic recombination and DNA repair, while the RuvA-RuvB complex plays an important role in the rescue of blocked DNA replication forks via replication fork reversal (RFR). RuvA specifically binds to HJ cruciform DNA, conferring on it an open structure. The RuvB hexamer acts as an ATP-dependent pump, pulling dsDNA into and through the RuvAB complex. HJ branch migration allows RuvC to scan DNA until it finds its consensus sequence, where it cleaves and resolves the cruciform DNA. This is Holliday junction branch migration complex subunit RuvA from Lacticaseibacillus casei (strain BL23) (Lactobacillus casei).